The primary structure comprises 564 residues: Benomyl/methotrexate resistance protein (564 aa).

Residues 60-101 form a disordered region; it reads IDNQGEPNSSQSSSSNNTIVDNNNNNNNDVDGDKIVVTWDGD. Residues 67–88 show a composition bias toward low complexity; the sequence is NSSQSSSSNNTIVDNNNNNNND. Helical transmembrane passes span 116 to 136, 153 to 173, 184 to 204, 210 to 229, 241 to 262, 274 to 294, 358 to 374, 393 to 411, 431 to 451, 457 to 476, 489 to 506, and 530 to 551; these read AFFIFQISFLTTSVYMGSAVY, VATLPLTLFVIGYGVGPLVFS, TSIYIITLFLFVILQIPTALV, LCILRFLGGFFASPCLATGG, LPVGLAAWSLGAVCGPSFGPFF, WTFWFMCIISGFSFVMLCFTL, IYIAMVYSILYLFFEVF, YMSIVIGIVIAAFIYIPVI, IPIAIVGGILLTSGLFIFGWS, HWVGPLFGAATTASGAFLIF, PHYIASVFASNDLFRSVI, and WGSSVLGFITLVMIAIPVLFYL.

Belongs to the major facilitator superfamily. CAR1 family.

It is found in the membrane. In terms of biological role, probable transporter. Confers resistance to benomyl and methotrexate. In Candida albicans (Yeast), this protein is Benomyl/methotrexate resistance protein (MDR1).